The following is a 694-amino-acid chain: Inactive protein-arginine deiminase type-6 (694 aa).

Phosphoserine occurs at positions 10 and 446.

Belongs to the protein arginine deiminase family. In terms of assembly, homodimers. Associates with alpha-tubulin. In terms of processing, phosphorylation at Ser-10, possibly by RSK-type kinases, and Ser-446 creates binding sites for 14-3-3 proteins. As to expression, highly expressed in oocytes and weakly expressed in other somatic tissues.

The protein resides in the cytoplasm. It is found in the cytoplasmic vesicle. The protein localises to the secretory vesicle. It localises to the cortical granule. Its subcellular location is the nucleus. Its function is as follows. Structural constituent of cytoplasmic lattices, which plays a key role in early embryonic development. Cytoplasmic lattices consist in fibrous structures found in the cytoplasm of oocytes and preimplantation embryos. They are required to store maternal proteins critical for embryonic development, such as ribosomal proteins and proteins that control epigenetic reprogramming of the preimplantation embryo, and prevent their degradation or activation. In contrast to other members of the family, does not show protein-arginine deiminase activity due to its inability to bind Ca(2+). The sequence is that of Inactive protein-arginine deiminase type-6 from Homo sapiens (Human).